A 137-amino-acid polypeptide reads, in one-letter code: SPbeta prophage-derived disulfide bond formation protein A (137 aa).

An N-terminal signal peptide occupies residues 1–25; that stretch reads MKKWIVLFLVLIAAAISIFVYVSTG. Residues 26-136 enclose the Thioredoxin domain; the sequence is SEKPFYNDIN…IEKFFDKNGD (111 aa). C58 and C61 are joined by a disulfide.

The protein belongs to the thioredoxin family.

The protein resides in the secreted. In terms of biological role, unknown; dispensable for production of the lantibiotic sublancin 168 and for competence for DNA uptake. This chain is SPbeta prophage-derived disulfide bond formation protein A (bdbA), found in Bacillus subtilis (strain 168).